The sequence spans 406 residues: 4-hydroxy-3-methylbut-2-en-1-yl diphosphate synthase (ferredoxin) (406 aa).

Positions 313, 316, 347, and 354 each coordinate [4Fe-4S] cluster.

This sequence belongs to the IspG family. [4Fe-4S] cluster serves as cofactor.

The enzyme catalyses (2E)-4-hydroxy-3-methylbut-2-enyl diphosphate + 2 oxidized [2Fe-2S]-[ferredoxin] + H2O = 2-C-methyl-D-erythritol 2,4-cyclic diphosphate + 2 reduced [2Fe-2S]-[ferredoxin] + H(+). It functions in the pathway isoprenoid biosynthesis; isopentenyl diphosphate biosynthesis via DXP pathway; isopentenyl diphosphate from 1-deoxy-D-xylulose 5-phosphate: step 5/6. Functionally, converts 2C-methyl-D-erythritol 2,4-cyclodiphosphate (ME-2,4cPP) into 1-hydroxy-2-methyl-2-(E)-butenyl 4-diphosphate. The protein is 4-hydroxy-3-methylbut-2-en-1-yl diphosphate synthase (ferredoxin) of Picosynechococcus sp. (strain ATCC 27264 / PCC 7002 / PR-6) (Agmenellum quadruplicatum).